A 314-amino-acid polypeptide reads, in one-letter code: MACGSVDPHGLLSSPLASARLNSLPYMEGPWIWSCGQTNITCKVVNGKAVEVGKWPWQVSILFLGMYICSGSLIHHHWILTAAHCLQRSKNPAKYTVKVGVQTLPDNSTSELLVTRIVIHENFINRMSDDIAILKLKYPVTWSPLVQPICLPSFNLKPSIGTMCWVVGWGLEKAEGHPKTPYSVQGLAVRIVNNEICNHRYQFLLLKNQKKFIGNDMLCTSSEWGLDTCQDTSGSSLVCQMNKTWVQMGVVSWNFDCGRRQFPSVYTSTSHFTQWIKRQIGDLKFTSMAVPSFLSPFILTGYILLVSLGSLWLL.

The 238-residue stretch at 44-281 (VVNGKAVEVG…FTQWIKRQIG (238 aa)) folds into the Peptidase S1 domain. A disulfide bridge connects residues Cys-69 and Cys-85. Residues His-84 and Asp-130 each act as charge relay system in the active site. 3 disulfides stabilise this stretch: Cys-164–Cys-239, Cys-197–Cys-219, and Cys-229–Cys-257. Ser-233 serves as the catalytic Charge relay system. The helical transmembrane segment at 293-313 (FLSPFILTGYILLVSLGSLWL) threads the bilayer.

The protein belongs to the peptidase S1 family.

It localises to the membrane. This Mus musculus (Mouse) protein is Serine protease 46 (Prss46).